The chain runs to 373 residues: Core trichothecene cluster (CTC) protein 14 (373 aa).

This sequence belongs to the TRI14 family.

In terms of biological role, part of the core gene cluster that mediates the biosynthesis of trichothecenes, a very large family of chemically related bicyclic sesquiterpene compounds acting as mycotoxins, including T2-toxin. The biosynthesis of trichothecenes begins with the cyclization of farnesyl diphosphate to trichodiene and is catalyzed by the trichodiene synthase TRI5. Trichodiene undergoes a series of oxygenations catalyzed by the cytochrome P450 monooxygenase TRI4. TRI4 controls the addition of four oxygens at C-2, C-3, C-11, and the C-12, C-13-epoxide to form the intermediate isotrichotriol. Isotrichotriol then undergoes a non-enzymatic isomerization and cyclization to form isotrichodermol. During this process, the oxygen at the C-2 position becomes the pyran ring oxygen and the hydroxyl group at C-11 is lost. More complex type A trichothecenes are built by modifying isotrichodermol through a series of paired hydroxylation and acetylation or acylation steps. Isotrichodermol is converted to isotrichodermin by the acetyltransferase TRI101. TRI101 encodes a C-3 transacetylase that acts as a self-protection or resistance factor during biosynthesis and that the presence of a free C-3 hydroxyl group is a key component of Fusarium trichothecene phytotoxicity. A second hydroxyl group is added to C-15 by the trichothecene C-15 hydroxylase TRI11, producing 15-decalonectrin, which is then acetylated by TRI3, producing calonectrin. A third hydroxyl group is added at C-4 by the cytochrome P450 monooxygenase TRI13, converting calonectrin to 3,15-diacetoxyspirpenol, which is subsequently acetylated bythe acetyltransferase TRI7. A fourth hydroxyl group is added to C-8 by the cytochrome P450 monooxygenase TRI1, followed by the addition of an isovaleryl moiety by TRI16. Finally, the acetyl group is removed from the C-3 position by the trichothecene C-3 esterase TRI8 to produce T-2 toxin. In Fusarium sporotrichioides, this protein is Core trichothecene cluster (CTC) protein 14.